A 204-amino-acid chain; its full sequence is Holliday junction branch migration complex subunit RuvA (204 aa).

The domain I stretch occupies residues 1–64 (MIGRLRGILL…EDAQLLYGFN (64 aa)). Residues 65–143 (TVKERALFRE…GWGAGDLFTP (79 aa)) form a domain II region. Positions 144-155 (FTDAAPTDSAAA) are flexible linker. A domain III region spans residues 156–204 (SSNSAEEEAVSALLALGYKPTQASKVVSQIAKPDMSSEQLIREALKSMV).

This sequence belongs to the RuvA family. Homotetramer. Forms an RuvA(8)-RuvB(12)-Holliday junction (HJ) complex. HJ DNA is sandwiched between 2 RuvA tetramers; dsDNA enters through RuvA and exits via RuvB. An RuvB hexamer assembles on each DNA strand where it exits the tetramer. Each RuvB hexamer is contacted by two RuvA subunits (via domain III) on 2 adjacent RuvB subunits; this complex drives branch migration. In the full resolvosome a probable DNA-RuvA(4)-RuvB(12)-RuvC(2) complex forms which resolves the HJ.

The protein localises to the cytoplasm. In terms of biological role, the RuvA-RuvB-RuvC complex processes Holliday junction (HJ) DNA during genetic recombination and DNA repair, while the RuvA-RuvB complex plays an important role in the rescue of blocked DNA replication forks via replication fork reversal (RFR). RuvA specifically binds to HJ cruciform DNA, conferring on it an open structure. The RuvB hexamer acts as an ATP-dependent pump, pulling dsDNA into and through the RuvAB complex. HJ branch migration allows RuvC to scan DNA until it finds its consensus sequence, where it cleaves and resolves the cruciform DNA. This Vibrio parahaemolyticus serotype O3:K6 (strain RIMD 2210633) protein is Holliday junction branch migration complex subunit RuvA.